Here is a 120-residue protein sequence, read N- to C-terminus: DNA-directed RNA polymerase II subunit rpb11 (120 aa).

Belongs to the archaeal Rpo11/eukaryotic RPB11/RPC19 RNA polymerase subunit family. In terms of assembly, component of the RNA polymerase II (Pol II) complex consisting of 12 subunits.

It localises to the nucleus. Its function is as follows. DNA-dependent RNA polymerase catalyzes the transcription of DNA into RNA using the four ribonucleoside triphosphates as substrates. Component of RNA polymerase II which synthesizes mRNA precursors and many functional non-coding RNAs. Pol II is the central component of the basal RNA polymerase II transcription machinery. It is composed of mobile elements that move relative to each other. RPB11 is part of the core element with the central large cleft. This is DNA-directed RNA polymerase II subunit rpb11 (polr2j) from Dictyostelium discoideum (Social amoeba).